The following is a 156-amino-acid chain: Small ribosomal subunit protein uS7 (156 aa).

The protein belongs to the universal ribosomal protein uS7 family. Part of the 30S ribosomal subunit. Contacts proteins S9 and S11.

One of the primary rRNA binding proteins, it binds directly to 16S rRNA where it nucleates assembly of the head domain of the 30S subunit. Is located at the subunit interface close to the decoding center, probably blocks exit of the E-site tRNA. This Streptococcus pyogenes serotype M12 (strain MGAS2096) protein is Small ribosomal subunit protein uS7.